Reading from the N-terminus, the 927-residue chain is Disks large homolog 1 (927 aa).

The region spanning 4–64 is the L27 domain; the sequence is RKQDTQRALH…FYEVTLLDNP (61 aa). Phosphothreonine is present on threonine 115. Residues serine 122, serine 138, and serine 158 each carry the phosphoserine modification. An interaction with SH3 domains region spans residues 162-212; the sequence is PTEAVPPSSPTVPVIPVLPVPAENTVILPTIPQANPPPVLVNTDSLETSTY. The tract at residues 224 to 546 is required for interaction with MARCHF2; the sequence is EITLERGNSG…QAVTIVAQYR (323 aa). 3 PDZ domains span residues 230-317, 325-412, and 474-555; these read GNSG…SEKI, GPKG…YMND, and TGLG…RFEA. Position 232 is a phosphoserine (serine 232). Tyrosine 399 carries the post-translational modification Phosphotyrosine. Phosphoserine is present on residues serine 568, serine 573, serine 575, serine 579, serine 598, serine 619, serine 707, serine 710, and serine 857. The SH3 domain maps to 581–651; that stretch reads KRSLYVRALF…PSKRRVEKKE (71 aa). The Guanylate kinase-like domain maps to 683–858; sequence RKFPFYKNKD…ISIFIKPKSM (176 aa). The tract at residues 691-719 is disordered; sequence KDQSEQETSDADQHITSNASDSESSYRGQ. Positions 704 to 717 are enriched in polar residues; the sequence is HITSNASDSESSYR.

This sequence belongs to the MAGUK family. In terms of assembly, homotetramer. Interacts (via guanylate kinase-like domain) with DLGAP1, DLGAP2, DLGAP3, DLGAP4 and MAP1A. Interacts (via guanylate kinase-like domain) with KIF13B. May interact with HTR2A. Interacts (via PDZ domains) with GRIA1. Interacts (via PDZ domains) with GRIN2A. Interacts (via PDZ domains) with KCND2 and KCND3. Interacts (via PDZ domains) with KCNA1, KCNA2, KCNA3 and KCNA4. Interacts (via PDZ domains) with ADGRA3. Interacts with KCNF1. Interacts with CAMK2. Interacts with cytoskeleton-associated protein EPB41. Interacts with cytoskeleton-associated protein EZR. Found in a complex with KCNA5 and CAV3. Found in a complex with APC and CTNNB1. Interacts (via PDZ domains) with APC. Interacts with CDH1 through binding to PIK3R1. Forms multiprotein complexes with CASK, LIN7A, LIN7B, LIN7C, APBA1, and KCNJ12. Interacts with TOPK. Forms a tripartite complex composed of DLG1, MPP7 and LIN7 (LIN7A or LIN7C). May interact with TJAP1. Interacts with PTEN. Interacts with FRMPD4 (via C-terminus). Interacts with LRFN1, LRFN2 and LRFN4. Interacts with SFPQ. Interacts (via PDZ domains) with ADGRA2 (via PDZ-binding motif). Interacts with ADAM10; this interaction recruits ADAM10 to the cell membrane during long-term depression in hippocampal neurons. Interacts with DGKI (via PDZ-binding motif). Interacts (via PDZ domains) with MARCHF2 (via PDZ domain); the interaction leads to DLG1 ubiqtuitination and degradation. Interacts (via N-terminus) with MPP3; this interaction connects CADM1 with DLG1 and links CADM1 with the regulatory subunit of phosphoinositide-3-kinase (PI3K) by forming a multiprotein complex and participates in cell spreading. In terms of processing, phosphorylated by MAPK12. Phosphorylation of Ser-232 regulates association with GRIN2A. Ubiquitinated; by MARCHF2 which results in its degradation.

It is found in the cell membrane. The protein localises to the basolateral cell membrane. The protein resides in the endoplasmic reticulum membrane. Its subcellular location is the postsynaptic density. It localises to the synapse. It is found in the sarcolemma. The protein localises to the apical cell membrane. The protein resides in the cell junction. Its subcellular location is the cytoplasm. Essential multidomain scaffolding protein required for normal development. Recruits channels, receptors and signaling molecules to discrete plasma membrane domains in polarized cells. Promotes epithelial cell layer barrier function via maintaining cell-cell adhesion. May also play a role in adherens junction assembly, signal transduction, cell proliferation, synaptogenesis and lymphocyte activation. Regulates the excitability of cardiac myocytes by modulating the functional expression of Kv4 channels. Functional regulator of Kv1.5 channel. During long-term depression in hippocampal neurons, it recruits ADAM10 to the plasma membrane. The protein is Disks large homolog 1 (DLG1) of Canis lupus familiaris (Dog).